We begin with the raw amino-acid sequence, 241 residues long: ATP synthase subunit a (241 aa).

5 helical membrane passes run 30 to 50, 91 to 111, 128 to 148, 193 to 213, and 214 to 234; these read GQVF…VVIG, FIGT…LVPW, INTT…AGLS, LVVA…VMFL, and GLFT…YYIG.

The protein belongs to the ATPase A chain family. In terms of assembly, F-type ATPases have 2 components, CF(1) - the catalytic core - and CF(0) - the membrane proton channel. CF(1) has five subunits: alpha(3), beta(3), gamma(1), delta(1), epsilon(1). CF(0) has four main subunits: a, b, b' and c.

It is found in the cellular thylakoid membrane. In terms of biological role, key component of the proton channel; it plays a direct role in the translocation of protons across the membrane. The polypeptide is ATP synthase subunit a (Prochlorococcus marinus (strain NATL1A)).